The following is a 284-amino-acid chain: IGKAHGGVSVSGGVGERTREGNXLYMEMKESKVINEQNISESKVALVYGQMNEPPGARMRVGLTALTMAEYFRDVNKQDVLLFIDNIFRFVQAGSEVSALLGRMPSAVGYQPTLGTEMGSLQERITSTKEGSITSIQAVYVPADDLTDPAPATTSAHLDATTVLSRGLAAKGIYPAVDPLDSTSTMLQPWIVGEEHYDTAQGVKQTLQRYKELQDIIAILGLDELSEEDRLTVARARKIERFLSQPFFVAEVFTGSPGKYVRLSETIKGFQMILSGELDXLPEQ.

The protein belongs to the ATPase alpha/beta chains family. F-type ATPases have 2 components, CF(1) - the catalytic core - and CF(0) - the membrane proton channel. CF(1) has five subunits: alpha(3), beta(3), gamma(1), delta(1), epsilon(1). CF(0) has four main subunits: a(1), b(1), b'(1) and c(9-12).

Its subcellular location is the plastid. The protein resides in the chloroplast thylakoid membrane. It carries out the reaction ATP + H2O + 4 H(+)(in) = ADP + phosphate + 5 H(+)(out). Produces ATP from ADP in the presence of a proton gradient across the membrane. The catalytic sites are hosted primarily by the beta subunits. The polypeptide is ATP synthase subunit beta, chloroplastic (atpB) (Asplenium nidus (Bird's nest fern)).